The primary structure comprises 358 residues: tRNA-specific 2-thiouridylase MnmA (358 aa).

ATP-binding positions include 8-15 (GLSGGVDS) and Leu-34. Residue Cys-95 is the Nucleophile of the active site. Cys-95 and Cys-194 are oxidised to a cystine. Residue Gly-120 coordinates ATP. The interaction with tRNA stretch occupies residues 144 to 146 (KDQ). The Cysteine persulfide intermediate role is filled by Cys-194. The interval 299–300 (RY) is interaction with tRNA.

The protein belongs to the MnmA/TRMU family.

The protein resides in the cytoplasm. The catalysed reaction is S-sulfanyl-L-cysteinyl-[protein] + uridine(34) in tRNA + AH2 + ATP = 2-thiouridine(34) in tRNA + L-cysteinyl-[protein] + A + AMP + diphosphate + H(+). Its function is as follows. Catalyzes the 2-thiolation of uridine at the wobble position (U34) of tRNA, leading to the formation of s(2)U34. The polypeptide is tRNA-specific 2-thiouridylase MnmA (Synechocystis sp. (strain ATCC 27184 / PCC 6803 / Kazusa)).